A 131-amino-acid chain; its full sequence is Ribosome-binding factor A (131 aa).

It belongs to the RbfA family. Monomer. Binds 30S ribosomal subunits, but not 50S ribosomal subunits or 70S ribosomes.

The protein resides in the cytoplasm. Functionally, one of several proteins that assist in the late maturation steps of the functional core of the 30S ribosomal subunit. Associates with free 30S ribosomal subunits (but not with 30S subunits that are part of 70S ribosomes or polysomes). Required for efficient processing of 16S rRNA. May interact with the 5'-terminal helix region of 16S rRNA. The sequence is that of Ribosome-binding factor A from Christiangramia forsetii (strain DSM 17595 / CGMCC 1.15422 / KT0803) (Gramella forsetii).